Here is a 209-residue protein sequence, read N- to C-terminus: Pyroglutamyl-peptidase 1 (209 aa).

Residues glutamate 85, cysteine 149, and histidine 168 contribute to the active site.

Belongs to the peptidase C15 family. Monomer.

Its subcellular location is the cytoplasm. It carries out the reaction Release of an N-terminal pyroglutamyl group from a polypeptide, the second amino acid generally not being Pro.. Removes 5-oxoproline from various penultimate amino acid residues except L-proline. The sequence is that of Pyroglutamyl-peptidase 1 (Pgpep1) from Mus musculus (Mouse).